The chain runs to 329 residues: Peroxidase 17 (329 aa).

An N-terminal signal peptide occupies residues 1–19 (MSLLPHLILYLTLLTVVVT). Cystine bridges form between Cys32-Cys112, Cys65-Cys70, Cys118-Cys315, and Cys197-Cys229. His63 functions as the Proton acceptor in the catalytic mechanism. Asp64, Val67, Gly69, Asp71, and Ser73 together coordinate Ca(2+). Position 160 (Pro160) interacts with substrate. 2 N-linked (GlcNAc...) asparagine glycosylation sites follow: Asn165 and Asn177. His190 is a binding site for heme b. Ser191 is a binding site for Ca(2+). Asn206 and Asn236 each carry an N-linked (GlcNAc...) asparagine glycan. Positions 242, 244, and 249 each coordinate Ca(2+).

Belongs to the peroxidase family. Classical plant (class III) peroxidase subfamily. Heme b serves as cofactor. The cofactor is Ca(2+).

The protein resides in the secreted. It localises to the vacuole. It catalyses the reaction 2 a phenolic donor + H2O2 = 2 a phenolic radical donor + 2 H2O. Removal of H(2)O(2), oxidation of toxic reductants, biosynthesis and degradation of lignin, suberization, auxin catabolism, response to environmental stresses such as wounding, pathogen attack and oxidative stress. These functions might be dependent on each isozyme/isoform in each plant tissue. The protein is Peroxidase 17 (PER17) of Arabidopsis thaliana (Mouse-ear cress).